A 140-amino-acid chain; its full sequence is Large ribosomal subunit protein uL14 (140 aa).

It belongs to the universal ribosomal protein uL14 family.

This is Large ribosomal subunit protein uL14 (rpl-23) from Caenorhabditis elegans.